The following is a 475-amino-acid chain: GTPase Der (475 aa).

2 EngA-type G domains span residues 2–166 (LRIA…NIPE) and 213–386 (LKIA…ETVS). Residues 8–15 (GRPNVGKS), 55–59 (DTGGV), 118–121 (NKAD), 219–226 (GRPNVGKS), 266–270 (DTAGL), and 331–334 (NKWD) each bind GTP. Positions 387-471 (RKVPTPVVNK…PFDLEIKEKA (85 aa)) constitute a KH-like domain.

This sequence belongs to the TRAFAC class TrmE-Era-EngA-EngB-Septin-like GTPase superfamily. EngA (Der) GTPase family. In terms of assembly, associates with the 50S ribosomal subunit.

In terms of biological role, GTPase that plays an essential role in the late steps of ribosome biogenesis. The protein is GTPase Der of Chlamydia felis (strain Fe/C-56) (Chlamydophila felis).